Consider the following 122-residue polypeptide: Large ribosomal subunit protein uL14 (122 aa).

It belongs to the universal ribosomal protein uL14 family. Part of the 50S ribosomal subunit. Forms a cluster with proteins L3 and L19. In the 70S ribosome, L14 and L19 interact and together make contacts with the 16S rRNA in bridges B5 and B8.

Binds to 23S rRNA. Forms part of two intersubunit bridges in the 70S ribosome. The chain is Large ribosomal subunit protein uL14 from Mycoplasma genitalium (strain ATCC 33530 / DSM 19775 / NCTC 10195 / G37) (Mycoplasmoides genitalium).